Reading from the N-terminus, the 155-residue chain is MPKYVEGKLNAEGLRFGIVVGRFNSFIGERLLEGALDALLRHGANDAQITVVRVPGAFEIPLTAQKMAGSGNYDALICLGAVIRGSTPHFDYVSSEVSKGIAHVSLATGVPVAFGVLTTDTIEQAIERAGTKAGNKGFDAAMTVIEIANVFKEMK.

Residues Phe-23, 57-59 (AFE), and 81-83 (AVI) each bind 5-amino-6-(D-ribitylamino)uracil. 86-87 (ST) is a binding site for (2S)-2-hydroxy-3-oxobutyl phosphate. The active-site Proton donor is His-89. Residue Phe-114 coordinates 5-amino-6-(D-ribitylamino)uracil. Residue Arg-128 participates in (2S)-2-hydroxy-3-oxobutyl phosphate binding.

It belongs to the DMRL synthase family.

The catalysed reaction is (2S)-2-hydroxy-3-oxobutyl phosphate + 5-amino-6-(D-ribitylamino)uracil = 6,7-dimethyl-8-(1-D-ribityl)lumazine + phosphate + 2 H2O + H(+). It participates in cofactor biosynthesis; riboflavin biosynthesis; riboflavin from 2-hydroxy-3-oxobutyl phosphate and 5-amino-6-(D-ribitylamino)uracil: step 1/2. In terms of biological role, catalyzes the formation of 6,7-dimethyl-8-ribityllumazine by condensation of 5-amino-6-(D-ribitylamino)uracil with 3,4-dihydroxy-2-butanone 4-phosphate. This is the penultimate step in the biosynthesis of riboflavin. This is 6,7-dimethyl-8-ribityllumazine synthase from Citrifermentans bemidjiense (strain ATCC BAA-1014 / DSM 16622 / JCM 12645 / Bem) (Geobacter bemidjiensis).